The chain runs to 393 residues: MDPKRSQKESVLITGGSGYFGFRLGCALNQNGVHVILFDISSPAQTIPEGIKFIQGDIRHLSDVEKAFQDADVTCVFHIASYGMSGREQLNRNLIKEVNVRGTDNILQVCQRRRVPRLVYTSTFNVIFGGQVIRNGDESLPYLPLHLHPDHYSRTKSIAEQKVLEANATPLDRGDGVLRTCALRPAGIYGPGEQRHLPRIVSYIEKGLFKFVYGDPRSLVEFVHVDNLVQAHILASEALRADKGHIASGQPYFISDGRPVNNFEFFRPLVEGLGYTFPSTRLPLTLVYCFAFLTEMVHFILGRLYNFQPFLTRTEVYKTGVTHYFSLEKAKKELGYKAQPFDLQEAVEWFKAHGHGRSSGSRDSECFVWDGLLVFLLIIAVLMWLPSSVILSL.

The active-site Proton acceptor is the Tyr-152. Lys-156 contacts NAD(+). 2 helical membrane-spanning segments follow: residues 282-302 (LPLTLVYCFAFLTEMVHFILG) and 371-391 (GLLVFLLIIAVLMWLPSSVIL).

Belongs to the 3-beta-HSD family.

It localises to the membrane. This Homo sapiens (Human) protein is Short-chain dehydrogenase/reductase family 42E member 1 (SDR42E1).